The following is a 211-amino-acid chain: FMN-dependent NADH:quinone oxidoreductase 2 (211 aa).

102–105 lines the FMN pocket; sequence MWNF.

It belongs to the azoreductase type 1 family. In terms of assembly, homodimer. Requires FMN as cofactor.

It carries out the reaction 2 a quinone + NADH + H(+) = 2 a 1,4-benzosemiquinone + NAD(+). It catalyses the reaction N,N-dimethyl-1,4-phenylenediamine + anthranilate + 2 NAD(+) = 2-(4-dimethylaminophenyl)diazenylbenzoate + 2 NADH + 2 H(+). Its function is as follows. Quinone reductase that provides resistance to thiol-specific stress caused by electrophilic quinones. In terms of biological role, also exhibits azoreductase activity. Catalyzes the reductive cleavage of the azo bond in aromatic azo compounds to the corresponding amines. In Bacillus thuringiensis subsp. konkukian (strain 97-27), this protein is FMN-dependent NADH:quinone oxidoreductase 2.